The sequence spans 101 residues: Replication restart protein PriB (101 aa).

The region spanning 1 to 101 (MTTNNLVLAG…LHAENVELKT (101 aa)) is the SSB domain.

It belongs to the PriB family. Homodimer. Interacts with PriA and DnaT. Component of the replication restart primosome. Primosome assembly occurs via a 'hand-off' mechanism. PriA binds to replication forks, subsequently PriB then DnaT bind; DnaT then displaces ssDNA to generate the helicase loading substrate.

Functionally, involved in the restart of stalled replication forks, which reloads the replicative helicase on sites other than the origin of replication; the PriA-PriB pathway is the major replication restart pathway. During primosome assembly it facilitates complex formation between PriA and DnaT on DNA; stabilizes PriA on DNA. Stimulates the DNA unwinding activity of PriA helicase. This chain is Replication restart protein PriB, found in Shewanella halifaxensis (strain HAW-EB4).